Consider the following 187-residue polypeptide: Ribosome-recycling factor (187 aa).

Belongs to the RRF family.

It localises to the cytoplasm. Functionally, responsible for the release of ribosomes from messenger RNA at the termination of protein biosynthesis. May increase the efficiency of translation by recycling ribosomes from one round of translation to another. This is Ribosome-recycling factor from Flavobacterium johnsoniae (strain ATCC 17061 / DSM 2064 / JCM 8514 / BCRC 14874 / CCUG 350202 / NBRC 14942 / NCIMB 11054 / UW101) (Cytophaga johnsonae).